The chain runs to 407 residues: Putative colanic acid biosynthesis glycosyl transferase WcaI (407 aa).

It functions in the pathway slime biogenesis; slime polysaccharide biosynthesis. The sequence is that of Putative colanic acid biosynthesis glycosyl transferase WcaI (wcaI) from Escherichia coli (strain K12).